We begin with the raw amino-acid sequence, 563 residues long: Arginine--tRNA ligase (563 aa).

A 'HIGH' region motif is present at residues 121 to 131 (PNIAKPFSIGH).

It belongs to the class-I aminoacyl-tRNA synthetase family. As to quaternary structure, monomer.

The protein resides in the cytoplasm. It carries out the reaction tRNA(Arg) + L-arginine + ATP = L-arginyl-tRNA(Arg) + AMP + diphosphate. This is Arginine--tRNA ligase from Streptococcus pneumoniae serotype 19F (strain G54).